A 92-amino-acid polypeptide reads, in one-letter code: Large ribosomal subunit protein uL23c (92 aa).

It belongs to the universal ribosomal protein uL23 family. As to quaternary structure, part of the 50S ribosomal subunit.

Its subcellular location is the plastid. It is found in the chloroplast. Its function is as follows. Binds to 23S rRNA. This Mesostigma viride (Green alga) protein is Large ribosomal subunit protein uL23c (rpl23).